Consider the following 360-residue polypeptide: Phospho-N-acetylmuramoyl-pentapeptide-transferase (360 aa).

10 helical membrane passes run 19–39 (LTYL…LSIF), 73–93 (TMGG…WADL), 95–115 (SVYT…GWTD), 136–156 (YLSL…DTPI), 173–193 (GILF…AVNL), 199–219 (GLAI…AYLS), 233–253 (IAGA…GLGF), 263–283 (VFMG…VAVV), 288–308 (LAFA…MIQV), and 338–358 (VTIR…STLK).

Belongs to the glycosyltransferase 4 family. MraY subfamily. Requires Mg(2+) as cofactor.

It localises to the cell inner membrane. It catalyses the reaction UDP-N-acetyl-alpha-D-muramoyl-L-alanyl-gamma-D-glutamyl-meso-2,6-diaminopimeloyl-D-alanyl-D-alanine + di-trans,octa-cis-undecaprenyl phosphate = di-trans,octa-cis-undecaprenyl diphospho-N-acetyl-alpha-D-muramoyl-L-alanyl-D-glutamyl-meso-2,6-diaminopimeloyl-D-alanyl-D-alanine + UMP. It functions in the pathway cell wall biogenesis; peptidoglycan biosynthesis. Its function is as follows. Catalyzes the initial step of the lipid cycle reactions in the biosynthesis of the cell wall peptidoglycan: transfers peptidoglycan precursor phospho-MurNAc-pentapeptide from UDP-MurNAc-pentapeptide onto the lipid carrier undecaprenyl phosphate, yielding undecaprenyl-pyrophosphoryl-MurNAc-pentapeptide, known as lipid I. The sequence is that of Phospho-N-acetylmuramoyl-pentapeptide-transferase from Dichelobacter nodosus (strain VCS1703A).